A 440-amino-acid polypeptide reads, in one-letter code: tRNA(Ile)-lysidine synthase (440 aa).

Position 28 to 33 (28 to 33 (SGGMDS)) interacts with ATP.

It belongs to the tRNA(Ile)-lysidine synthase family.

The protein resides in the cytoplasm. The catalysed reaction is cytidine(34) in tRNA(Ile2) + L-lysine + ATP = lysidine(34) in tRNA(Ile2) + AMP + diphosphate + H(+). In terms of biological role, ligates lysine onto the cytidine present at position 34 of the AUA codon-specific tRNA(Ile) that contains the anticodon CAU, in an ATP-dependent manner. Cytidine is converted to lysidine, thus changing the amino acid specificity of the tRNA from methionine to isoleucine. This Xanthomonas axonopodis pv. citri (strain 306) protein is tRNA(Ile)-lysidine synthase.